The chain runs to 551 residues: Trigger factor (551 aa).

Residues 165 to 250 form the PPIase FKBP-type domain; sequence GDLVVLDFAG…ATDVRVPGET (86 aa). A disordered region spans residues 442–551; sequence ADDDTIGKGH…APAKKKAAAE (110 aa). Over residues 458–472 the composition is skewed to basic and acidic residues; the sequence is GHDHHDHDHDHDHAA. Over residues 513–541 the composition is skewed to low complexity; that stretch reads EAAPAPKKAPAKKAAAAKAEEAPAAAPKK. Positions 542–551 are enriched in basic residues; the sequence is APAKKKAAAE.

Belongs to the FKBP-type PPIase family. Tig subfamily.

It is found in the cytoplasm. The catalysed reaction is [protein]-peptidylproline (omega=180) = [protein]-peptidylproline (omega=0). Its function is as follows. Involved in protein export. Acts as a chaperone by maintaining the newly synthesized protein in an open conformation. Functions as a peptidyl-prolyl cis-trans isomerase. This Rhizorhabdus wittichii (strain DSM 6014 / CCUG 31198 / JCM 15750 / NBRC 105917 / EY 4224 / RW1) (Sphingomonas wittichii) protein is Trigger factor.